Reading from the N-terminus, the 257-residue chain is Isoprenyl transferase (257 aa).

Asp-37 is a catalytic residue. Residue Asp-37 coordinates Mg(2+). Residues 38–41, Trp-42, Arg-50, His-54, and 82–84 each bind substrate; these read GNGR and STE. Asn-85 acts as the Proton acceptor in catalysis. Residues Trp-86, Arg-88, Arg-205, and 211–213 each bind substrate; that span reads RLS. Glu-224 is a Mg(2+) binding site.

This sequence belongs to the UPP synthase family. In terms of assembly, homodimer. The cofactor is Mg(2+).

Functionally, catalyzes the condensation of isopentenyl diphosphate (IPP) with allylic pyrophosphates generating different type of terpenoids. The polypeptide is Isoprenyl transferase (Shouchella clausii (strain KSM-K16) (Alkalihalobacillus clausii)).